A 936-amino-acid chain; its full sequence is Lon protease homolog, mitochondrial (936 aa).

The transit peptide at 1-40 (MYATRAIARRLERHAARCKGAHVARAVRGARARTTSAPRA) directs the protein to the mitochondrion. Positions 65 to 95 (AFVSSVDGDGSTGSTGSSSSSSSSAFGDSAS) are disordered. Residues 66–95 (FVSSVDGDGSTGSTGSSSSSSSSAFGDSAS) show a composition bias toward low complexity. Residues 112–352 (VLAVPLPRRP…ATLELLKKEV (241 aa)) enclose the Lon N-terminal domain. Residue 507–514 (GPPGVGKT) coordinates ATP. Positions 748-932 (VTPPGVVTGL…DEVYRQALDW (185 aa)) constitute a Lon proteolytic domain. Residues serine 838 and lysine 881 contribute to the active site.

This sequence belongs to the peptidase S16 family. As to quaternary structure, homohexamer or homoheptamer. Organized in a ring with a central cavity.

It localises to the mitochondrion matrix. It catalyses the reaction Hydrolysis of proteins in presence of ATP.. Functionally, ATP-dependent serine protease that mediates the selective degradation of misfolded, unassembled or oxidatively damaged polypeptides as well as certain short-lived regulatory proteins in the mitochondrial matrix. May also have a chaperone function in the assembly of inner membrane protein complexes. Participates in the regulation of mitochondrial gene expression and in the maintenance of the integrity of the mitochondrial genome. Binds to mitochondrial DNA in a site-specific manner. The polypeptide is Lon protease homolog, mitochondrial (Ostreococcus lucimarinus (strain CCE9901)).